The chain runs to 342 residues: Probable allantoicase (342 aa).

Belongs to the allantoicase family.

It catalyses the reaction allantoate + H2O = (S)-ureidoglycolate + urea. It participates in nitrogen metabolism; (S)-allantoin degradation; (S)-ureidoglycolate from allantoate (aminidohydrolase route): step 1/1. Its function is as follows. Utilization of purines as secondary nitrogen sources, when primary sources are limiting. The protein is Probable allantoicase of Schizosaccharomyces pombe (strain 972 / ATCC 24843) (Fission yeast).